Consider the following 478-residue polypeptide: Ribosomal RNA small subunit methyltransferase F (478 aa).

Residues 123-129 (AAAPGSK), Glu147, Asp174, and Asp192 contribute to the S-adenosyl-L-methionine site. Residue Cys245 is the Nucleophile of the active site.

This sequence belongs to the class I-like SAM-binding methyltransferase superfamily. RsmB/NOP family.

The protein resides in the cytoplasm. It catalyses the reaction cytidine(1407) in 16S rRNA + S-adenosyl-L-methionine = 5-methylcytidine(1407) in 16S rRNA + S-adenosyl-L-homocysteine + H(+). Its function is as follows. Specifically methylates the cytosine at position 1407 (m5C1407) of 16S rRNA. In Vibrio parahaemolyticus serotype O3:K6 (strain RIMD 2210633), this protein is Ribosomal RNA small subunit methyltransferase F.